A 257-amino-acid polypeptide reads, in one-letter code: Type 2 phosphatidylinositol 4,5-bisphosphate 4-phosphatase (257 aa).

Residues 1 to 10 show a composition bias toward basic and acidic residues; the sequence is MAADGVDERS. Residues 1 to 34 are disordered; it reads MAADGVDERSPLLSASHSGSVTPTAPPYLQDSSP. Polar residues predominate over residues 13-23; that stretch reads LSASHSGSVTP. T22 carries the phosphothreonine modification. Residue S33 is modified to Phosphoserine. C107 is an active-site residue. The CX5R motif motif lies at 107–113; it reads CKDTSRR. The next 2 helical transmembrane spans lie at 192-212 and 227-247; these read CCAY…LTVG and WAIA…WGAI.

The protein localises to the late endosome membrane. The protein resides in the lysosome membrane. It localises to the cytoplasmic vesicle. Its subcellular location is the phagosome membrane. It is found in the cell membrane. The enzyme catalyses a 1,2-diacyl-sn-glycero-3-phospho-(1D-myo-inositol-4,5-bisphosphate) + H2O = a 1,2-diacyl-sn-glycero-3-phospho-(1D-myo-inositol-5-phosphate) + phosphate. In terms of biological role, catalyzes the hydrolysis of phosphatidylinositol-4,5-bisphosphate (PtdIns-4,5-P2) to phosphatidylinositol-4-phosphate (PtdIns-4-P). Does not hydrolyze phosphatidylinositol 3,4,5-trisphosphate, phosphatidylinositol 3,4-bisphosphate, inositol 3,5-bisphosphate, inositol 3,4-bisphosphate, phosphatidylinositol 5-monophosphate, phosphatidylinositol 4-monophosphate and phosphatidylinositol 3-monophosphate. Negatively regulates the phagocytosis of large particles by reducing phagosomal phosphatidylinositol 4,5-bisphosphate accumulation during cup formation. In Bos taurus (Bovine), this protein is Type 2 phosphatidylinositol 4,5-bisphosphate 4-phosphatase.